Here is an 805-residue protein sequence, read N- to C-terminus: MMSARYPRTAAEWTTRIQGVSSERCDLEMLLKDEWRNRIAVRDDDPGVRATRQRDIVVDGREYTALKDALRAADGVSAGALALASLHSVMRAYGHGEQTVAAFVDATATAELKTAAVLPVIVDHIEHTRLTCAEAIRELDETLRRKDSYTRADEVLQRGLFDALLVLAEREVALSELPSAPLVMVVRDDAARGRLCWTMAYAGELFEDTTVAGVLEVVREVLGQYAGRPGDRVAEIELASREQRERLQRWNATDGDFPADQRLNDLVEAAVRRSPDREAVVFGTQRLTYREVDARANRFAHWLLGPGLGVRSQQLVGIFLDKSDLGVVATLGIWKAGAAYVPIDPAYPAERVRFAVGDTGLRGIVTNRHHAGRLREILGAEHADVTVVEIESVLDEQAAADTDGLLSVKPELALGVRDLAYLTYTSGTTGVPKGVPKYHDSVVNSITDLSERYDMRRPGTERVALFASYVFEPHLRQTLIALINGQTLVVVPEEVRLDPDRFPAYIEEHGVTYLNATGSVLQHFDLRRRTSLKRLLLVGEELTAAGLRQLRERFSGRIVNEYAFTEAAFVTAVKKFAPGVTERADRSIGRPVRNVKWYVLSQDLKRLPVGAIGELYIGGCGVAPGYLNRDDLTAERFLTNPYASEQDRARGTNARIYRTGDLARMLPSGEVEFMGRSDFQLKLNGVRVEPGEIEAQATEYAGVRKCVVIAREGAGGGSDRHLVGYYLTEPGAGVTEAELLSFLERRLIRIMVPARMVRLESIPVNVNGKVDWRALPEVDLARPDTGGGAVGSTTTGGVRGELREI.

The segment at 783 to 805 is disordered; sequence PDTGGGAVGSTTTGGVRGELREI.

It belongs to the ATP-dependent AMP-binding enzyme family. Pantetheine 4'-phosphate is required as a cofactor.

The catalysed reaction is L-2-aminoadipate + L-valine + L-cysteine + 3 ATP + H2O = N-[(5S)-5-amino-5-carboxypentanoyl]-L-cysteinyl-D-valine + 3 AMP + 3 diphosphate + 3 H(+). It participates in antibiotic biosynthesis; penicillin G biosynthesis; penicillin G from L-alpha-aminoadipate and L-cysteine and L-valine: step 1/3. Its function is as follows. Each of the constituent amino acids of ACV are activated as aminoacyl-adenylates with peptide bonds formed through the participation of amino acid thioester intermediates. In Streptomyces clavuligerus, this protein is N-(5-amino-5-carboxypentanoyl)-L-cysteinyl-D-valine synthase (pcbAB).